A 126-amino-acid polypeptide reads, in one-letter code: Precursor of CEP2 (126 aa).

A signal peptide spans methionine 1–aspartate 19. Positions lysine 20 to asparagine 80 are excised as a propeptide. A hydroxyproline mark is found at proline 84 and proline 87. The propeptide occupies proline 96–asparagine 105. 3 positions are modified to hydroxyproline: proline 109, proline 112, and proline 116. Residues proline 121–valine 126 constitute a propeptide that is removed on maturation.

Belongs to the C-terminally encoded plant signaling peptide (CEP) family. Interacts with CEP receptors (e.g. CEPR1 and CEPR2). The mature small signaling peptide is generated by proteolytic processing of the longer precursor. Mostly expressed in roots. Present in cotyledons, shoot apical meristem (SAM), leaves, inflorescence stems and flowers.

The protein localises to the secreted. Its subcellular location is the extracellular space. It localises to the apoplast. Extracellular signaling peptide that represses primary root growth rate. Negatively regulates the number of leaves and flowering, and modulates leaf morphology. Regulates systemic nitrogen (N)-demand signaling. Mediates up-regulation of genes involved in N uptake and assimilation pathways. This Arabidopsis thaliana (Mouse-ear cress) protein is Precursor of CEP2.